The chain runs to 2260 residues: Reducing polyketide synthase pksF (2260 aa).

The region spanning 20 to 445 is the Ketosynthase family 3 (KS3) domain; it reads VEPIAIVGFG…GTNAHVVLDD (426 aa). Residues Cys194, His329, and His368 each act as for beta-ketoacyl synthase activity in the active site. The tract at residues 598-933 is malonyl-CoA:ACP transacylase (MAT) domain; sequence FVFTGQGAQW…ECAGKLHTIG (336 aa). Catalysis depends on Ser689, which acts as the For malonyltransferase activity. The N-terminal hotdog fold stretch occupies residues 984–1121; the sequence is HELLGSRTPD…GYVAIEYDDR (138 aa). A dehydratase (DH) domain region spans residues 984–1281; the sequence is HELLGSRTPD…FRNKLFSITA (298 aa). The 323-residue stretch at 984-1306 folds into the PKS/mFAS DH domain; the sequence is HELLGSRTPD…TSTIGRNSPS (323 aa). The active-site Proton acceptor; for dehydratase activity is His1016. Positions 1150-1306 are C-terminal hotdog fold; sequence RIAIDSADIY…TSTIGRNSPS (157 aa). The active-site Proton donor; for dehydratase activity is Asp1216. Residues 1544–1859 form an enoylreductase (ER) domain region; the sequence is GILKTLHYEQ…DVDVVEKIVI (316 aa). Residues 1882–2104 form a ketoreductase (KR) domain region; it reads PDASYLIAGA…LRFCCDPDRV (223 aa). A Carrier domain is found at 2174–2251; that stretch reads QATDIVVEAI…LLAVKVAGKS (78 aa). Ser2211 is modified (O-(pantetheine 4'-phosphoryl)serine).

It depends on pantetheine 4'-phosphate as a cofactor.

Reducing polyketide synthase that catalyzes the formation of a C22 intermediate attached to the ACP. Release by intramolecular hydrolysis by the enolized delta-carbonyl would give the pyrone product aslanipyrone. Alternatively, KR-mediated reduction of the beta-carbonyl of the C22 intermediate would form a beta-hydroxy thioester intermediate, which could be a substrate for a further KS-mediated condensation of an additional C2 unit to form a C24 intermediate, which cyclizes by aldol condensation followed by decarboxylation to form aslaniol. Neither aslanipyrone, aslaniol, nor their derivatives have been detected in A.solani, probably due to a low abundance and/or extensive post-PKS modification. It is assumed that the branching point from C22 to C24 is the result of KR activity on the C22 intermediate anchored to the ACP. This Alternaria solani protein is Reducing polyketide synthase pksF.